The primary structure comprises 146 residues: PTS system fructose-specific EIIA component (146 aa).

A PTS EIIA type-4 domain is found at 1–124 (MISVIISGHG…NLKAMSQQSF (124 aa)). Residue histidine 9 is the Tele-phosphohistidine intermediate of the active site. Phosphohistidine; by HPr is present on histidine 9.

The protein localises to the cytoplasm. The phosphoenolpyruvate-dependent sugar phosphotransferase system (sugar PTS), a major carbohydrate active transport system, catalyzes the phosphorylation of incoming sugar substrates concomitantly with their translocation across the cell membrane. The enzyme II LevDE PTS system is involved in fructose transport. Functionally, levD and LevE act as negative regulators of the levanase operon. They may be involved in a PTS-mediated phosphorylation of a regulator. In Bacillus subtilis (strain 168), this protein is PTS system fructose-specific EIIA component.